Here is a 529-residue protein sequence, read N- to C-terminus: UDP-glycosyltransferase (529 aa).

N-linked (GlcNAc...) asparagine glycosylation is found at Asn70 and Asn420. The helical transmembrane segment at 504–524 (LDLYLVYIALFAVPVGAVRWI) threads the bilayer.

Belongs to the glycosyltransferase 28 family.

The protein localises to the membrane. It catalyses the reaction stromemycin aglycone + UDP-alpha-D-glucose = stromemycin + UDP + H(+). It participates in mycotoxin biosynthesis. Its function is as follows. UDP-glycosyltransferase; part of the gene cluster that mediates the biosynthesis of stromemycin, a depside C-glucoside with two unsaturated C9 side chains belonging to aromatic polyketide glycosides. Acts as the tailoring enzyme responsible for 3-C-glucosylation of bininalkenylresorcylic acid to yield stromemycin. This chain is UDP-glycosyltransferase, found in Talaromyces amestolkiae.